Here is a 188-residue protein sequence, read N- to C-terminus: MKGLKITAAAGAMTLFFASMAYASGDSGHGPDWGNFAFRVVNFVIFAGIIWKAAGKKIVGFFTGRRQGIEQELNDLETRKTEAKKQLAEVERRIANLESERQAILADYRAQGENIKAAIIDKAEKSASLITEQAKRTADNEIKAAIDAMRAQMADEIIVAAEKLLAEKLTANEHEKLIDKYLTKVVLN.

The chain crosses the membrane as a helical span at residues 7–26 (TAAAGAMTLFFASMAYASGD).

It belongs to the ATPase B chain family. F-type ATPases have 2 components, F(1) - the catalytic core - and F(0) - the membrane proton channel. F(1) has five subunits: alpha(3), beta(3), gamma(1), delta(1), epsilon(1). F(0) has three main subunits: a(1), b(2) and c(10-14). The alpha and beta chains form an alternating ring which encloses part of the gamma chain. F(1) is attached to F(0) by a central stalk formed by the gamma and epsilon chains, while a peripheral stalk is formed by the delta and b chains.

It localises to the cell inner membrane. Functionally, f(1)F(0) ATP synthase produces ATP from ADP in the presence of a proton or sodium gradient. F-type ATPases consist of two structural domains, F(1) containing the extramembraneous catalytic core and F(0) containing the membrane proton channel, linked together by a central stalk and a peripheral stalk. During catalysis, ATP synthesis in the catalytic domain of F(1) is coupled via a rotary mechanism of the central stalk subunits to proton translocation. Its function is as follows. Component of the F(0) channel, it forms part of the peripheral stalk, linking F(1) to F(0). This chain is ATP synthase subunit b, found in Nitratidesulfovibrio vulgaris (strain DP4) (Desulfovibrio vulgaris).